The primary structure comprises 542 residues: E3 ubiquitin-protein ligase RNF217 (542 aa).

Disordered stretches follow at residues 1–140 and 176–216; these read MGEE…TRVG and APAS…TDSL. The segment covering 37-50 has biased composition (low complexity); the sequence is SARAPPLRAASAEP. Residues 122–132 are compositionally biased toward acidic residues; that stretch reads DEQQEAPPGEE. Positions 185 to 196 are enriched in pro residues; sequence PASPPGAPPVLN. Low complexity predominate over residues 197-213; that stretch reads PPSTRSSFPSPRLSLPT. The tract at residues 259–478 is TRIAD supradomain; it reads MVLMCRVCLE…LSIFGCKYRY (220 aa). 10 residues coordinate Zn(2+): Cys-263, Cys-266, Cys-283, Cys-286, Cys-383, Cys-386, His-391, Cys-396, Cys-423, and Cys-426. The RING-type 1 zinc finger occupies 263–309; it reads CRVCLEDKPIKPLPCCKKAVCEECLKVYLSAQVQLGQVEIKCPITEC. Residues 328–396 form an IBR-type zinc finger; it reads IKYKYFLELG…HSPWHEGVNC (69 aa). An RING-type 2; atypical zinc finger spans residues 423–452; the sequence is CPKCKIHIQRTEGCDHMTCSQCNTNFCYRC. Cys-436 is an active-site residue. Residues Cys-441, Cys-444, Cys-449, Cys-452, His-465, and Cys-474 each coordinate Zn(2+). The chain crosses the membrane as a helical span at residues 503–523; the sequence is LIMVLGLALGAIAVVIGLFVF.

Belongs to the RBR family. RNF217 subfamily. In terms of assembly, interacts with HAX1. Mainly expressed in testis and skeletal muscle.

The protein resides in the membrane. It is found in the cytoplasm. The enzyme catalyses [E2 ubiquitin-conjugating enzyme]-S-ubiquitinyl-L-cysteine + [acceptor protein]-L-lysine = [E2 ubiquitin-conjugating enzyme]-L-cysteine + [acceptor protein]-N(6)-ubiquitinyl-L-lysine.. Its pathway is protein modification; protein ubiquitination. Functionally, E3 ubiquitin-protein ligase which accepts ubiquitin from E2 ubiquitin-conjugating enzymes in the form of a thioester and then directly transfers the ubiquitin to targeted substrates. Mediates the degradation of the iron exporter ferroportin/SLC40A1 and thus regulates iron homeostasis. The sequence is that of E3 ubiquitin-protein ligase RNF217 (RNF217) from Homo sapiens (Human).